We begin with the raw amino-acid sequence, 309 residues long: Glutaminase (309 aa).

The substrate site is built by serine 64, asparagine 114, glutamate 160, asparagine 167, tyrosine 191, tyrosine 243, and valine 261.

This sequence belongs to the glutaminase family. Homotetramer.

The enzyme catalyses L-glutamine + H2O = L-glutamate + NH4(+). In Methylorubrum extorquens (strain PA1) (Methylobacterium extorquens), this protein is Glutaminase.